We begin with the raw amino-acid sequence, 148 residues long: Ubiquitin conjugating enzyme E2 B (148 aa).

The UBC core domain occupies 2–148 (AAHKRLQKEI…AKEWTKKYAK (147 aa)). The active-site Glycyl thioester intermediate is cysteine 87.

Belongs to the ubiquitin-conjugating enzyme family. As to quaternary structure, interacts with mkkA (via F-box/WD40 repeat domains).

The enzyme catalyses S-ubiquitinyl-[E1 ubiquitin-activating enzyme]-L-cysteine + [E2 ubiquitin-conjugating enzyme]-L-cysteine = [E1 ubiquitin-activating enzyme]-L-cysteine + S-ubiquitinyl-[E2 ubiquitin-conjugating enzyme]-L-cysteine.. The protein operates within protein modification; protein ubiquitination. In terms of biological role, involved in protein ubiquitination and degradation during development. Mediates protein ubiquitination at the mound and finger stage required for subsequent development and may be an essential component of the developmental transition between the induction of postaggregative gene expression and subsequent cell-type differentiation and morphogenesis. ubcB and ubpB differentially control ubiquitination/deubiquitination and degradation of mkkA protein in a cell-type-specific and temporally regulated manner. The sequence is that of Ubiquitin conjugating enzyme E2 B (ubcB) from Dictyostelium discoideum (Social amoeba).